Reading from the N-terminus, the 155-residue chain is Peptidyl-prolyl cis-trans isomerase ppi1 (155 aa).

Residues Met1 to Ala154 form the PPIase cyclophilin-type domain.

Belongs to the cyclophilin-type PPIase family. PPIL1 subfamily. As to quaternary structure, interacts with cwf13/snw1.

It carries out the reaction [protein]-peptidylproline (omega=180) = [protein]-peptidylproline (omega=0). Functionally, PPIases accelerate the folding of proteins. It catalyzes the cis-trans isomerization of proline imidic peptide bonds in oligopeptides. The chain is Peptidyl-prolyl cis-trans isomerase ppi1 (ppi1) from Schizosaccharomyces pombe (strain 972 / ATCC 24843) (Fission yeast).